The sequence spans 290 residues: Glutaredoxin domain-containing cysteine-rich protein 1 (290 aa).

The region spanning 127–234 (LQQPSADLEF…DLLTKIERVQ (108 aa)) is the Glutaredoxin domain.

The protein belongs to the GRXCR1 family. In the inner ear, expressed predominantly in sensory hair cells and their stereocilia bundles with higher levels in outer hair cells (OHC) at P1 and in inner hair cells (IHC) at P5. At P1, expression is prominent in each row of stereocilia within bundles including immature shorter stereocilia. Expression is also observed in apical microvilli of sensory cells at P1 and in kinocilia at P1 and P5. In the adult, expression is localized throughout the length of the stereocilia of both OHC and IHC (at protein level).

The protein localises to the cell projection. Its subcellular location is the stereocilium. It is found in the microvillus. It localises to the kinocilium. Functionally, may play a role in actin filament architecture in developing stereocilia of sensory cells. This is Glutaredoxin domain-containing cysteine-rich protein 1 (Grxcr1) from Mus musculus (Mouse).